We begin with the raw amino-acid sequence, 175 residues long: Lipoprotein signal peptidase (175 aa).

Helical transmembrane passes span 25–45 (LWMAFALLVVVLDQFFKIVIV), 56–76 (VTGFFNLVLVYNKGAAFSFLA), 81–101 (WQRWFFTGLGIVVGAFIVWLL), and 110–130 (FCFAVSLILGGAVGNVIDRVV). Catalysis depends on residues Asp136 and Asp154. A helical transmembrane segment spans residues 146–166 (HWPAFNVADCAITVGAVLLIV).

It belongs to the peptidase A8 family.

Its subcellular location is the cell inner membrane. It carries out the reaction Release of signal peptides from bacterial membrane prolipoproteins. Hydrolyzes -Xaa-Yaa-Zaa-|-(S,diacylglyceryl)Cys-, in which Xaa is hydrophobic (preferably Leu), and Yaa (Ala or Ser) and Zaa (Gly or Ala) have small, neutral side chains.. It participates in protein modification; lipoprotein biosynthesis (signal peptide cleavage). This protein specifically catalyzes the removal of signal peptides from prolipoproteins. The sequence is that of Lipoprotein signal peptidase from Cupriavidus necator (strain ATCC 17699 / DSM 428 / KCTC 22496 / NCIMB 10442 / H16 / Stanier 337) (Ralstonia eutropha).